Reading from the N-terminus, the 413-residue chain is Probable tRNA pseudouridine synthase D (413 aa).

D97 functions as the Nucleophile in the catalytic mechanism. The TRUD domain maps to 167 to 370; the sequence is AVPNYYGYQR…YGSYRRARLE (204 aa).

It belongs to the pseudouridine synthase TruD family.

It catalyses the reaction uridine(13) in tRNA = pseudouridine(13) in tRNA. Could be responsible for synthesis of pseudouridine from uracil-13 in transfer RNAs. The polypeptide is Probable tRNA pseudouridine synthase D (Pyrobaculum arsenaticum (strain DSM 13514 / JCM 11321 / PZ6)).